The sequence spans 293 residues: tRNA pseudouridine synthase B (293 aa).

D39 functions as the Nucleophile in the catalytic mechanism.

This sequence belongs to the pseudouridine synthase TruB family. Type 1 subfamily.

It carries out the reaction uridine(55) in tRNA = pseudouridine(55) in tRNA. Its function is as follows. Responsible for synthesis of pseudouridine from uracil-55 in the psi GC loop of transfer RNAs. This chain is tRNA pseudouridine synthase B, found in Streptococcus mutans serotype c (strain ATCC 700610 / UA159).